The sequence spans 214 residues: Large ribosomal subunit protein uL4c (214 aa).

Residues 42-81 form a disordered region; sequence VKQSNEKRQGSANTKTRSEVRGGGRKPWRQKGTGRARAGS. The span at 64–75 shows a compositional bias: basic residues; it reads GGRKPWRQKGTG.

It belongs to the universal ribosomal protein uL4 family. In terms of assembly, part of the 50S ribosomal subunit.

Its subcellular location is the plastid. The protein localises to the chloroplast. In terms of biological role, probably binds the 23S rRNA. This Pyropia yezoensis (Susabi-nori) protein is Large ribosomal subunit protein uL4c (rpl4).